The sequence spans 291 residues: ATP synthase subunit a (291 aa).

The next 5 helical transmembrane spans lie at 48 to 68 (IHLDSMGWSIGLGIIFCLVFW), 108 to 128 (IAPLALTIFVWIFLMNLMDLI), 161 to 181 (DPNITLGMSLSVFVLILFYSI), 241 to 261 (LIFILIALLPFWIQWALSVPW), and 262 to 282 (AIFHILVITLQAFIFMMLTIV).

Belongs to the ATPase A chain family. As to quaternary structure, F-type ATPases have 2 components, CF(1) - the catalytic core - and CF(0) - the membrane proton channel. CF(1) has five subunits: alpha(3), beta(3), gamma(1), delta(1), epsilon(1). CF(0) has three main subunits: a(1), b(2) and c(9-12). The alpha and beta chains form an alternating ring which encloses part of the gamma chain. CF(1) is attached to CF(0) by a central stalk formed by the gamma and epsilon chains, while a peripheral stalk is formed by the delta and b chains.

It is found in the cell inner membrane. In terms of biological role, key component of the proton channel; it plays a direct role in the translocation of protons across the membrane. The chain is ATP synthase subunit a from Acinetobacter baylyi (strain ATCC 33305 / BD413 / ADP1).